We begin with the raw amino-acid sequence, 328 residues long: ABC transporter I family member 20 (328 aa).

Residues 14 to 257 (VEISGLRFTY…SKKSLMRTVE (244 aa)) enclose the ABC transporter domain. 55–62 (GSNGAGKT) lines the ATP pocket. The disordered stretch occupies residues 263-295 (ERDEERKRRKERKANGLPEFETRTEESRVTGDP). A compositionally biased stretch (basic and acidic residues) spans 282–291 (FETRTEESRV).

The protein belongs to the ABC transporter superfamily. ABCI family.

The protein resides in the cytoplasm. This is ABC transporter I family member 20 (ABCI20) from Arabidopsis thaliana (Mouse-ear cress).